The following is a 383-amino-acid chain: Acyl-CoA dehydrogenase, short-chain specific (383 aa).

Catalysis depends on glutamate 367, which acts as the Proton acceptor.

The protein belongs to the acyl-CoA dehydrogenase family. As to quaternary structure, homotetramer. It depends on FAD as a cofactor.

It carries out the reaction butanoyl-CoA + oxidized [electron-transfer flavoprotein] + H(+) = (2E)-butenoyl-CoA + reduced [electron-transfer flavoprotein]. The catalysed reaction is a short-chain 2,3-saturated fatty acyl-CoA + oxidized [electron-transfer flavoprotein] + H(+) = a short-chain (2E)-enoyl-CoA + reduced [electron-transfer flavoprotein]. Its function is as follows. Has an optimum specificity for 4-carbon length fatty acyl-CoAs. The chain is Acyl-CoA dehydrogenase, short-chain specific from Megasphaera elsdenii.